A 150-amino-acid chain; its full sequence is UPF0179 protein Mbur_1033 (150 aa).

The protein belongs to the UPF0179 family.

The protein is UPF0179 protein Mbur_1033 of Methanococcoides burtonii (strain DSM 6242 / NBRC 107633 / OCM 468 / ACE-M).